We begin with the raw amino-acid sequence, 716 residues long: Polyribonucleotide nucleotidyltransferase (716 aa).

Aspartate 488 and aspartate 494 together coordinate Mg(2+). Residues 555-614 (PKIETITIPTDKIREVIGTGGKVIREIVATTGAKVDINDEGTVKVSASDGAKIKAAIDWI) enclose the KH domain. Positions 624 to 692 (GAIYDGKVVK…DRGKTKLSMK (69 aa)) constitute an S1 motif domain. The disordered stretch occupies residues 695 to 716 (DQETGEDLSKKEAVSPEEAVNT).

It belongs to the polyribonucleotide nucleotidyltransferase family. It depends on Mg(2+) as a cofactor.

The protein resides in the cytoplasm. It catalyses the reaction RNA(n+1) + phosphate = RNA(n) + a ribonucleoside 5'-diphosphate. Functionally, involved in mRNA degradation. Catalyzes the phosphorolysis of single-stranded polyribonucleotides processively in the 3'- to 5'-direction. The protein is Polyribonucleotide nucleotidyltransferase of Caulobacter sp. (strain K31).